The sequence spans 175 residues: Shikimate kinase (175 aa).

Position 14–19 (14–19) interacts with ATP; the sequence is GAGKST. Residue serine 18 coordinates Mg(2+). Substrate is bound by residues aspartate 36, arginine 60, and glycine 82. An ATP-binding site is contributed by arginine 120. Arginine 140 contacts substrate. Glutamine 157 contacts ATP.

The protein belongs to the shikimate kinase family. In terms of assembly, monomer. The cofactor is Mg(2+).

Its subcellular location is the cytoplasm. The enzyme catalyses shikimate + ATP = 3-phosphoshikimate + ADP + H(+). The protein operates within metabolic intermediate biosynthesis; chorismate biosynthesis; chorismate from D-erythrose 4-phosphate and phosphoenolpyruvate: step 5/7. Catalyzes the specific phosphorylation of the 3-hydroxyl group of shikimic acid using ATP as a cosubstrate. The protein is Shikimate kinase of Pasteurella multocida (strain Pm70).